Reading from the N-terminus, the 444-residue chain is Tryptophan 5-hydroxylase 1 (444 aa).

The ACT domain maps to 19–94 (TLIFSLKNEV…TVLSVDSPDQ (76 aa)). At S58 the chain carries Phosphoserine; by PKA. Residues Y235, R257, and T265 each coordinate L-tryptophan. Residues H272, H277, and E317 each contribute to the Fe cation site. Residues S336 and I366 each coordinate L-tryptophan.

The protein belongs to the biopterin-dependent aromatic amino acid hydroxylase family. As to quaternary structure, homotetramer. Interacts with DNAJC12. The cofactor is Fe(2+). Post-translationally, ubiquitinated, leading to its degradation by the proteasome. Ubiquitinated is triggered by phosphorylation. Phosphorylated; triggering degradation by the proteasome.

The enzyme catalyses (6R)-L-erythro-5,6,7,8-tetrahydrobiopterin + L-tryptophan + O2 = 5-hydroxy-L-tryptophan + (4aS,6R)-4a-hydroxy-L-erythro-5,6,7,8-tetrahydrobiopterin. The protein operates within aromatic compound metabolism; serotonin biosynthesis; serotonin from L-tryptophan: step 1/2. Its function is as follows. Oxidizes L-tryptophan to 5-hydroxy-l-tryptophan in the rate-determining step of serotonin biosynthesis. This chain is Tryptophan 5-hydroxylase 1 (Tph1), found in Rattus norvegicus (Rat).